The sequence spans 295 residues: ATP synthase gamma chain (295 aa).

This sequence belongs to the ATPase gamma chain family. As to quaternary structure, F-type ATPases have 2 components, CF(1) - the catalytic core - and CF(0) - the membrane proton channel. CF(1) has five subunits: alpha(3), beta(3), gamma(1), delta(1), epsilon(1). CF(0) has three main subunits: a, b and c.

The protein localises to the cell inner membrane. In terms of biological role, produces ATP from ADP in the presence of a proton gradient across the membrane. The gamma chain is believed to be important in regulating ATPase activity and the flow of protons through the CF(0) complex. This is ATP synthase gamma chain from Paraburkholderia phymatum (strain DSM 17167 / CIP 108236 / LMG 21445 / STM815) (Burkholderia phymatum).